The following is a 329-amino-acid chain: UPF0421 protein SH1063 (329 aa).

5 consecutive transmembrane segments (helical) span residues Leu25–Ile45, Leu60–Pro80, Phe87–Val107, Ala108–Phe128, and Leu131–Pro151.

The protein belongs to the UPF0421 family.

The protein resides in the cell membrane. In Staphylococcus haemolyticus (strain JCSC1435), this protein is UPF0421 protein SH1063.